A 387-amino-acid chain; its full sequence is Eukaryotic translation initiation factor 3 subunit M (387 aa).

The PCI domain maps to 181-340; sequence LSSKVMIELL…RKVHISSTMH (160 aa).

Belongs to the eIF-3 subunit M family. Component of the eukaryotic translation initiation factor 3 (eIF-3) complex. The eIF-3 complex interacts with pix.

The protein localises to the cytoplasm. The protein resides in the golgi apparatus. Its function is as follows. Component of the eukaryotic translation initiation factor 3 (eIF-3) complex, which is involved in protein synthesis of a specialized repertoire of mRNAs and, together with other initiation factors, stimulates binding of mRNA and methionyl-tRNAi to the 40S ribosome. The eIF-3 complex specifically targets and initiates translation of a subset of mRNAs involved in cell proliferation. This is Eukaryotic translation initiation factor 3 subunit M from Drosophila grimshawi (Hawaiian fruit fly).